Reading from the N-terminus, the 332-residue chain is GTP 3',8-cyclase (332 aa).

One can recognise a Radical SAM core domain in the interval 7 to 221 (SYDRLHDYVR…FDTCKDNGLA (215 aa)). R16 is a GTP binding site. Residues C23 and C27 each coordinate [4Fe-4S] cluster. Y29 is a binding site for S-adenosyl-L-methionine. C30 contributes to the [4Fe-4S] cluster binding site. GTP is bound at residue R66. G70 lines the S-adenosyl-L-methionine pocket. T97 serves as a coordination point for GTP. S121 contributes to the S-adenosyl-L-methionine binding site. K158 is a binding site for GTP. Residue M192 participates in S-adenosyl-L-methionine binding. [4Fe-4S] cluster-binding residues include C256 and C259. 261 to 263 (RLR) provides a ligand contact to GTP. C273 serves as a coordination point for [4Fe-4S] cluster.

Belongs to the radical SAM superfamily. MoaA family. As to quaternary structure, monomer and homodimer. Requires [4Fe-4S] cluster as cofactor.

The enzyme catalyses GTP + AH2 + S-adenosyl-L-methionine = (8S)-3',8-cyclo-7,8-dihydroguanosine 5'-triphosphate + 5'-deoxyadenosine + L-methionine + A + H(+). The protein operates within cofactor biosynthesis; molybdopterin biosynthesis. Catalyzes the cyclization of GTP to (8S)-3',8-cyclo-7,8-dihydroguanosine 5'-triphosphate. This Lactiplantibacillus plantarum (strain ATCC BAA-793 / NCIMB 8826 / WCFS1) (Lactobacillus plantarum) protein is GTP 3',8-cyclase.